Consider the following 191-residue polypeptide: 7-methyl-GTP pyrophosphatase (191 aa).

The active-site Proton acceptor is the D70.

This sequence belongs to the Maf family. YceF subfamily. A divalent metal cation is required as a cofactor.

Its subcellular location is the cytoplasm. It carries out the reaction N(7)-methyl-GTP + H2O = N(7)-methyl-GMP + diphosphate + H(+). Functionally, nucleoside triphosphate pyrophosphatase that hydrolyzes 7-methyl-GTP (m(7)GTP). May have a dual role in cell division arrest and in preventing the incorporation of modified nucleotides into cellular nucleic acids. The protein is 7-methyl-GTP pyrophosphatase of Xanthomonas oryzae pv. oryzae (strain KACC10331 / KXO85).